Here is a 191-residue protein sequence, read N- to C-terminus: 3-isopropylmalate dehydratase small subunit (191 aa).

Belongs to the LeuD family. LeuD type 1 subfamily. Heterodimer of LeuC and LeuD.

It carries out the reaction (2R,3S)-3-isopropylmalate = (2S)-2-isopropylmalate. The protein operates within amino-acid biosynthesis; L-leucine biosynthesis; L-leucine from 3-methyl-2-oxobutanoate: step 2/4. Its function is as follows. Catalyzes the isomerization between 2-isopropylmalate and 3-isopropylmalate, via the formation of 2-isopropylmaleate. The polypeptide is 3-isopropylmalate dehydratase small subunit (Solibacter usitatus (strain Ellin6076)).